Consider the following 600-residue polypeptide: MNKLKVTLLASSVVLAATLLSACGSNQSSSTSTKKLKAGNFDVAYQNPDKAIKGGNLKVAYQSDSPMKAQWLSGLSNDATFATMSGPGGGQDGLFFTDSGFKFIKGGAADVALDKESKTATITLRKDLKWSDGSEVTAKDYEFTYETIANPAYGSDRWTDSLANIVGLSDYHTGKAKTISGITFPDGENGKVIKVQFKEMKPGMTQSGNGYFLETVAPYQYLKDVAPKDLASSPKTTTKPLVTGPFKPENVVAGESIKYVPNPYYWGEKPKLNSITYEVVSTAKSVAALSSSKYDIINGMVSSQYKQVKNLKGYKVLGQQAMYISLMYYNLGHYDAKNSINVQDRKTPLQDQNVRQAIGYARNVAEVDNKFSNGLSTPANSLIPPIFKQFTSSSVKGYEKQDLDKANKLLDEDGWKLNKSTGYREKDGKELSLVYAARVGDANAETIAQNYIQQWKKIGVKVSLYNGKLMEFNSWVDHMTTPPGANDWDITDGSWSLASEPSQQDLFSAAAPYNFGHFNDSEITKDLNDIDSAKSENPTYRKAAFVKYQEDMNKKAYVIPTNFMLNYTPVNKRVVGMTLDYGAMNTWSEIGVSSAKLATK.

The N-terminal stretch at 1–22 (MNKLKVTLLASSVVLAATLLSA) is a signal peptide. Cys-23 carries N-palmitoyl cysteine lipidation. The S-diacylglycerol cysteine moiety is linked to residue Cys-23.

The protein belongs to the bacterial solute-binding protein 5 family. In terms of assembly, the complex is composed of two ATP-binding proteins (OppD and OppF), two transmembrane proteins (OppB and OppC) and a solute-binding protein (OppA).

It is found in the cell membrane. Part of the ABC transporter complex OppABCDF involved in the uptake of oligopeptides. Essential for uptake of peptides larger than three amino acids and for growth in milk. In Lactococcus lactis subsp. lactis (Streptococcus lactis), this protein is Oligopeptide-binding protein OppA.